The following is a 171-amino-acid chain: Co-chaperone protein HscB (171 aa).

The J domain maps to 2 to 74 (DYFTLFGLPA…LTRAEYLLSL (73 aa)).

The protein belongs to the HscB family. Interacts with HscA and stimulates its ATPase activity. Interacts with IscU.

Its function is as follows. Co-chaperone involved in the maturation of iron-sulfur cluster-containing proteins. Seems to help targeting proteins to be folded toward HscA. This is Co-chaperone protein HscB from Salmonella typhimurium (strain LT2 / SGSC1412 / ATCC 700720).